Here is an 816-residue protein sequence, read N- to C-terminus: Ribonucleoside-diphosphate reductase large subunit (816 aa).

The ATP-cone domain maps to 1-92; that stretch reads MYVVKRDGRQ…VSNLHKNTKK (92 aa). ATP contacts are provided by residues 5–6, 11–17, T53, and D57; these read KR and ETVHFDK. 2 residues coordinate GDP: S202 and S217. C218 and C444 form a disulfide bridge. DTTP is bound by residues 226-228, K243, R256, and 263-264; these read DSI and RG. Residue N427 coordinates GDP. N427 serves as the catalytic Proton acceptor. The Cysteine radical intermediate role is filled by C429. GDP contacts are provided by residues E431 and 623 to 626; that span reads TAST. The active-site Proton acceptor is E431.

It belongs to the ribonucleoside diphosphate reductase large chain family. As to quaternary structure, heterotetramer of two large/R1 and two small/R2 subunits. A radical transfer pathway may occur between 'Tyr-125' of protein R2 and R1. Post-translationally, contains a disulfide bonds. Binding of the substrate occurs primarily when the active-site cysteines are reduced. In terms of tissue distribution, highly expressed in actively growing tissues such as young leaves, shoot apices, inflorescences and carpels. Very low expression in cotyledons, adult and cauline leaves and senescent leaves.

It localises to the cytoplasm. The catalysed reaction is a 2'-deoxyribonucleoside 5'-diphosphate + [thioredoxin]-disulfide + H2O = a ribonucleoside 5'-diphosphate + [thioredoxin]-dithiol. Its activity is regulated as follows. Under complex allosteric control mediated by deoxynucleoside triphosphates and ATP binding to separate specificity and activation sites on the large subunit. The type of nucleotide bound at the specificity site determines substrate preference. It seems probable that ATP makes the enzyme reduce CDP and UDP, dGTP favors ADP reduction and dTTP favors GDP reduction. Stimulated by ATP and inhibited by dATP binding to the activity site. In terms of biological role, provides the precursors necessary for DNA synthesis. Catalyzes the biosynthesis of deoxyribonucleotides from the corresponding ribonucleotides. R1 contains the binding sites for both substrates and allosteric effectors and carries out the actual reduction of the ribonucleotide. Ribonucleotide reductase (RNR) complex function is essential for efficient organellar DNA degradation in pollen. Involved in chloroplast division. This Arabidopsis thaliana (Mouse-ear cress) protein is Ribonucleoside-diphosphate reductase large subunit.